We begin with the raw amino-acid sequence, 254 residues long: Acetylglutamate kinase (254 aa).

Substrate contacts are provided by residues 40–41 (GG), Arg-62, and Asn-158.

Belongs to the acetylglutamate kinase family. ArgB subfamily.

Its subcellular location is the cytoplasm. The enzyme catalyses N-acetyl-L-glutamate + ATP = N-acetyl-L-glutamyl 5-phosphate + ADP. It functions in the pathway amino-acid biosynthesis; L-arginine biosynthesis; N(2)-acetyl-L-ornithine from L-glutamate: step 2/4. Functionally, catalyzes the ATP-dependent phosphorylation of N-acetyl-L-glutamate. This chain is Acetylglutamate kinase, found in Chloroflexus aggregans (strain MD-66 / DSM 9485).